The sequence spans 211 residues: ATP-dependent dethiobiotin synthetase BioD (211 aa).

13–18 (GVGKTV) is a binding site for ATP. T17 lines the Mg(2+) pocket. The active site involves K33. Residues C47 and E101 each contribute to the Mg(2+) site. Residues 101–104 (EGAG), 185–187 (PWL), and N192 contribute to the ATP site.

It belongs to the dethiobiotin synthetase family. Homodimer. The cofactor is Mg(2+).

It localises to the cytoplasm. The enzyme catalyses (7R,8S)-7,8-diammoniononanoate + CO2 + ATP = (4R,5S)-dethiobiotin + ADP + phosphate + 3 H(+). It functions in the pathway cofactor biosynthesis; biotin biosynthesis; biotin from 7,8-diaminononanoate: step 1/2. In terms of biological role, catalyzes a mechanistically unusual reaction, the ATP-dependent insertion of CO2 between the N7 and N8 nitrogen atoms of 7,8-diaminopelargonic acid (DAPA, also called 7,8-diammoniononanoate) to form a ureido ring. This Bradyrhizobium diazoefficiens (strain JCM 10833 / BCRC 13528 / IAM 13628 / NBRC 14792 / USDA 110) protein is ATP-dependent dethiobiotin synthetase BioD.